The sequence spans 156 residues: ATP synthase subunit b (156 aa).

Residues 7–27 (LIAQFVVFFILAGFTMKFVWP) form a helical membrane-spanning segment.

This sequence belongs to the ATPase B chain family. In terms of assembly, F-type ATPases have 2 components, F(1) - the catalytic core - and F(0) - the membrane proton channel. F(1) has five subunits: alpha(3), beta(3), gamma(1), delta(1), epsilon(1). F(0) has three main subunits: a(1), b(2) and c(10-14). The alpha and beta chains form an alternating ring which encloses part of the gamma chain. F(1) is attached to F(0) by a central stalk formed by the gamma and epsilon chains, while a peripheral stalk is formed by the delta and b chains.

It localises to the cell inner membrane. F(1)F(0) ATP synthase produces ATP from ADP in the presence of a proton or sodium gradient. F-type ATPases consist of two structural domains, F(1) containing the extramembraneous catalytic core and F(0) containing the membrane proton channel, linked together by a central stalk and a peripheral stalk. During catalysis, ATP synthesis in the catalytic domain of F(1) is coupled via a rotary mechanism of the central stalk subunits to proton translocation. In terms of biological role, component of the F(0) channel, it forms part of the peripheral stalk, linking F(1) to F(0). In Herminiimonas arsenicoxydans, this protein is ATP synthase subunit b.